Here is a 482-residue protein sequence, read N- to C-terminus: MSLSVNEGVDVKGLVDKVLEAYPEKSRRRRAKHLNVLEAEAKDCGVKSNIKSIPGVMTIRGCAYAGSKGVVWGPIKDMIHISHGPVGCGYYSWSGRRNYYVGDTGVDKLGTMHFTSDFQEKDIVFGGDKKLHKVIEEINELFPLVNGISIQSECPIGLNGDDIEGVSKAKSEELGKPVVPVRCEGFRGVSQSLGHHIANDVIRDWILPKKTEPKEGFVSTPYDVTIIGDYNIGGDAWASRILLEEIGLRVIAQWSGDGTLAELENQPKAKVNLIHSYRSMNYIARHMEEKFGIPWMEYNFFGPSQIAESLRKIAALFDDTIKENAEKVIAKYQPMVDAVVGDAALRAHGTKGRVPLKPLGPRHRPIVDAYHDLGMEIVGTGYEFAHNDDYQRTQHYVKEGTLIYDDVTAFELEKFVELMRPDLVASGIKEKYVFQKMGLPFRQMHSWDYSGPYHGYDGFAIFARDMDLAINNPVWGIMKAPF.

Cys-62, Cys-88, and Cys-154 together coordinate [8Fe-7S] cluster. His-445 lines the [7Fe-Mo-9S-C-homocitryl] cluster pocket.

It belongs to the NifD/NifK/NifE/NifN family. In terms of assembly, tetramer of two alpha and two beta chains. Forms complex with the iron protein (nitrogenase component 2). [8Fe-7S] cluster serves as cofactor. [7Fe-Mo-9S-C-homocitryl] cluster is required as a cofactor.

The enzyme catalyses N2 + 8 reduced [2Fe-2S]-[ferredoxin] + 16 ATP + 16 H2O = H2 + 8 oxidized [2Fe-2S]-[ferredoxin] + 2 NH4(+) + 16 ADP + 16 phosphate + 6 H(+). Functionally, this molybdenum-iron protein is part of the nitrogenase complex that catalyzes the key enzymatic reactions in nitrogen fixation. The chain is Nitrogenase molybdenum-iron protein alpha chain (nifD) from Azospirillum brasilense.